A 1235-amino-acid chain; its full sequence is DNA polymerase catalytic subunit (1235 aa).

Disordered regions lie at residues 640-692 (QGRF…TAGR) and 1098-1134 (ATAP…ASKP). Over residues 650-661 (APKRPAAAREDE) the composition is skewed to basic and acidic residues. Residues 662-675 (ERPEEEGEDEDERE) show a composition bias toward acidic residues. Over residues 676–691 (EGGGEREPEGARETAG) the composition is skewed to basic and acidic residues.

It belongs to the DNA polymerase type-B family. In terms of assembly, forms a complex with the ssDNA-binding protein UL29, the DNA polymerase processivity factor, and the alkaline exonuclease. Interacts with the putative helicase-primase complex subunit UL8; this interaction may coordinate leading and lagging strand DNA synthesis at the replication fork.

The protein localises to the host nucleus. It carries out the reaction DNA(n) + a 2'-deoxyribonucleoside 5'-triphosphate = DNA(n+1) + diphosphate. The catalysed reaction is Endonucleolytic cleavage to 5'-phosphomonoester.. Functionally, replicates viral genomic DNA. The replication complex is composed of six viral proteins: the DNA polymerase, processivity factor, primase, primase-associated factor, helicase, and ssDNA-binding protein. Additionally, the polymerase contains an intrinsic ribonuclease H (RNase H) activity that specifically degrades RNA/DNA heteroduplexes or duplex DNA substrates in the 5' to 3' direction. Therefore, it can catalyze the excision of the RNA primers that initiate the synthesis of Okazaki fragments at a replication fork during viral DNA replication. This is DNA polymerase catalytic subunit from Human herpesvirus 1 (strain Angelotti) (HHV-1).